Here is an 86-residue protein sequence, read N- to C-terminus: U-myrmeciitoxin(01)-Mg1a (86 aa).

A signal peptide spans 1–26 (MKLLYLLLTLAIIFVLTIVHAPNVEA). The propeptide occupies 27-52 (KALADPESDAVGFADAFGDADAEATG). L85 is subject to Leucine amide.

It belongs to the formicidae venom precursor-01 superfamily. As to expression, expressed by the venom gland. This toxin is detected along the entire venom gland, as well as in the venom reservoir, the venom duct and in the venom. No toxin are detected in the Dufour's gland.

It localises to the secreted. Its subcellular location is the target cell membrane. Toxin that may interact with target cell membranes, producing a concentration-dependent leak in ion conductance, possibly via multimeric pore formation. It produces an immediate sharp increase of calcium concentration in all DRG neurons. This influx in calcium stabilizes without resulting in any observable dye leakage, showing that the effect is not simply cytolytic. This toxin may be one of the major contributors to the pain associated with envenomation. The toxin also displays a weak cytotoxicity (on HEK cells) and some antimicrobial activity (MIC=2.5 uM on C.neoformans (var. grubii), MIC=10.2 uM on S.aureus), but is not hemolytic to human erythtrocytes. In vivo, intraplantar injection into mice causes spontaneous nocifensive behavior (licking, flinching, or shaking of the paw), which lasts 5-7 minutes (10 and 100 uM tested). Mechanical and heat hypoalgesia are observed at 20 and 25 minutes after injection (highest dose tested of 100 uM). In vivo, injection into crickets (A.domesticus) causes an immediate, dose-dependent, reversible and nonlethal incapacitation that lasts about 53 minutes at the highest dose tested (60 ug/g). This chain is U-myrmeciitoxin(01)-Mg1a, found in Myrmecia gulosa (Red bulldog ant).